Reading from the N-terminus, the 338-residue chain is Glyceraldehyde-3-phosphate dehydrogenase 2 (338 aa).

NAD(+) is bound by residues arginine 12 to isoleucine 13, aspartate 34, and arginine 79. D-glyceraldehyde 3-phosphate-binding positions include serine 150–threonine 152, threonine 181, threonine 210–glycine 211, and arginine 233. Cysteine 151 acts as the Nucleophile in catalysis. NAD(+) is bound at residue asparagine 315.

This sequence belongs to the glyceraldehyde-3-phosphate dehydrogenase family. Homotetramer.

It is found in the cytoplasm. The catalysed reaction is D-glyceraldehyde 3-phosphate + phosphate + NAD(+) = (2R)-3-phospho-glyceroyl phosphate + NADH + H(+). It participates in carbohydrate degradation; glycolysis; pyruvate from D-glyceraldehyde 3-phosphate: step 1/5. The polypeptide is Glyceraldehyde-3-phosphate dehydrogenase 2 (GPD2) (Mucor circinelloides f. lusitanicus (Mucor racemosus var. lusitanicus)).